The chain runs to 253 residues: Phycobilisome rod-core linker polypeptide CpcG4 (253 aa).

The PBS-linker domain maps to 11 to 191 (SSQNHRVTSF…DFQEKAGTVQ (181 aa)).

The protein belongs to the phycobilisome linker protein family. Part of the phycobilisome, a hemidiscoidal structure that is composed of two distinct substructures: a core complex and a number of rods radiating from the core.

The protein localises to the cellular thylakoid membrane. Its function is as follows. Rod-core linker protein required for attachment of phycocyanin to allophycocyanin in cores of phycobilisomes. In terms of biological role, linker polypeptides determine the state of aggregation and the location of the disk-shaped phycobiliprotein units within the phycobilisome and modulate their spectroscopic properties in order to mediate a directed and optimal energy transfer. The sequence is that of Phycobilisome rod-core linker polypeptide CpcG4 from Nostoc sp. (strain PCC 7120 / SAG 25.82 / UTEX 2576).